A 180-amino-acid chain; its full sequence is Segregation and condensation protein B (180 aa).

Belongs to the ScpB family. As to quaternary structure, homodimer. Homodimerization may be required to stabilize the binding of ScpA to the Smc head domains. Component of a cohesin-like complex composed of ScpA, ScpB and the Smc homodimer, in which ScpA and ScpB bind to the head domain of Smc. The presence of the three proteins is required for the association of the complex with DNA.

It localises to the cytoplasm. Its function is as follows. Participates in chromosomal partition during cell division. May act via the formation of a condensin-like complex containing Smc and ScpA that pull DNA away from mid-cell into both cell halves. This Staphylococcus aureus (strain MSSA476) protein is Segregation and condensation protein B.